The chain runs to 1044 residues: Isoleucine--tRNA ligase (1044 aa).

The 'HIGH' region motif lies at 48-58 (PFATGLPHFGH). A 'KMSKS' region motif is present at residues 594–598 (KMSKS). K597 serves as a coordination point for ATP.

This sequence belongs to the class-I aminoacyl-tRNA synthetase family. IleS type 2 subfamily. Monomer. It depends on Zn(2+) as a cofactor.

The protein localises to the cytoplasm. The enzyme catalyses tRNA(Ile) + L-isoleucine + ATP = L-isoleucyl-tRNA(Ile) + AMP + diphosphate. In terms of biological role, catalyzes the attachment of isoleucine to tRNA(Ile). As IleRS can inadvertently accommodate and process structurally similar amino acids such as valine, to avoid such errors it has two additional distinct tRNA(Ile)-dependent editing activities. One activity is designated as 'pretransfer' editing and involves the hydrolysis of activated Val-AMP. The other activity is designated 'posttransfer' editing and involves deacylation of mischarged Val-tRNA(Ile). This is Isoleucine--tRNA ligase from Borrelia hermsii (strain HS1 / DAH).